Consider the following 236-residue polypeptide: MEKASMIYEGKGKKLYNTSHPDQVVAEFKDDLTAFNAEKKGNEAGKGALNCQISTEIFKLLEAEGIKTHFIKQLDEKNMLCKRVSIIPIEVVTRNIATGSLSKRLGIKEGSVLPFSLVEFYYKDDALGDPIMNDEHAILLKCVNSQEELEFLKETAREINEILRSFFDSKGLNLVDFKLEFGKDIEGNILLADEISPDSCRFWDKKTNEKLDKDRFRQDLGNVKMAYEEVLRRILN.

It belongs to the SAICAR synthetase family.

The enzyme catalyses 5-amino-1-(5-phospho-D-ribosyl)imidazole-4-carboxylate + L-aspartate + ATP = (2S)-2-[5-amino-1-(5-phospho-beta-D-ribosyl)imidazole-4-carboxamido]succinate + ADP + phosphate + 2 H(+). It participates in purine metabolism; IMP biosynthesis via de novo pathway; 5-amino-1-(5-phospho-D-ribosyl)imidazole-4-carboxamide from 5-amino-1-(5-phospho-D-ribosyl)imidazole-4-carboxylate: step 1/2. The polypeptide is Phosphoribosylaminoimidazole-succinocarboxamide synthase (Wolinella succinogenes (strain ATCC 29543 / DSM 1740 / CCUG 13145 / JCM 31913 / LMG 7466 / NCTC 11488 / FDC 602W) (Vibrio succinogenes)).